A 310-amino-acid chain; its full sequence is Endo-1,4-beta-xylanase B (310 aa).

An N-terminal signal peptide occupies residues 1-19; sequence MISLSSVAIALTTVVGALA. The 191-residue stretch at 33–223 folds into the GH11 domain; it reads AITSSQTGTN…SSGSASMTVS (191 aa). The active-site Nucleophile is the E119. E210 functions as the Proton donor in the catalytic mechanism. Residues 218–227 show a composition bias toward low complexity; that stretch reads ASMTVSAGSS. Residues 218–274 are disordered; that stretch reads ASMTVSAGSSSSGGSGSGSGSGSGSGSGSGSQTTTAGSSTGTGTGSGSGSGSGGSGG. The segment covering 228-246 has biased composition (gly residues); it reads SSGGSGSGSGSGSGSGSGS. Over residues 247–256 the composition is skewed to low complexity; the sequence is GSQTTTAGSS. Over residues 257 to 274 the composition is skewed to gly residues; that stretch reads TGTGTGSGSGSGSGGSGG. The 36-residue stretch at 275-310 folds into the CBM1 domain; it reads NCAAQWGQCGGQGWNGPTCCSSGTCKASNQWYSQCL.

This sequence belongs to the glycosyl hydrolase 11 (cellulase G) family.

Its subcellular location is the secreted. The enzyme catalyses Endohydrolysis of (1-&gt;4)-beta-D-xylosidic linkages in xylans.. Its pathway is glycan degradation; xylan degradation. Its function is as follows. Endo-1,4-beta-xylanase involved in the hydrolysis of xylan, a major structural heterogeneous polysaccharide found in plant biomass representing the second most abundant polysaccharide in the biosphere, after cellulose. Hydrolyzes birchwood xylan, beechwood xylan, and oat spelt xylan to produce short-chain xylooligosaccharides, xylopentaose, xylotriose, and xylobiose as the main products. The polypeptide is Endo-1,4-beta-xylanase B (xynB) (Penicillium oxalicum).